Here is a 403-residue protein sequence, read N- to C-terminus: Phosphopentomutase (403 aa).

Mn(2+)-binding residues include Asp13, Asp298, His303, Asp339, His340, and His351.

Belongs to the phosphopentomutase family. Requires Mn(2+) as cofactor.

Its subcellular location is the cytoplasm. It catalyses the reaction 2-deoxy-alpha-D-ribose 1-phosphate = 2-deoxy-D-ribose 5-phosphate. The catalysed reaction is alpha-D-ribose 1-phosphate = D-ribose 5-phosphate. It functions in the pathway carbohydrate degradation; 2-deoxy-D-ribose 1-phosphate degradation; D-glyceraldehyde 3-phosphate and acetaldehyde from 2-deoxy-alpha-D-ribose 1-phosphate: step 1/2. Isomerase that catalyzes the conversion of deoxy-ribose 1-phosphate (dRib-1-P) and ribose 1-phosphate (Rib-1-P) to deoxy-ribose 5-phosphate (dRib-5-P) and ribose 5-phosphate (Rib-5-P), respectively. This Streptococcus equi subsp. zooepidemicus (strain H70) protein is Phosphopentomutase.